A 656-amino-acid polypeptide reads, in one-letter code: MEGDGSDPEPPDAGEDSKSENGENAPIYCICRKPDINCFMIGCDNCNEWFHGDCIRITEKMAKAIREWYCRECREKDPKLEIRYRHKKSRERDGNERDSSEPRDEGGGRKRPVPDPDLQRRAGSGTGVGAMLARGSASPHKSSPQPLVATPSQHHQQQQQQIKRSARMCGECEACRRTEDCGHCDFCRDMKKFGGPNKIRQKCRLRQCQLRARESYKYFPSSLSPVTPSESLPRPRRPLPTQQQPQPSQKLGRIREDEGAVASSTVKEPPEATATPEPLSDEDLPLDPDLYQDFCAGAFDDHGLPWMSDTEESPFLDPALRKRAVKVKHVKRREKKSEKKKEERYKRHRQKQKHKDKWKHPERADAKDPASLPQCLGPGCVRPAQPSSKYCSDDCGMKLAANRIYEILPQRIQQWQQSPCIAEEHGKKLLERIRREQQSARTRLQEMERRFHELEAIILRAKQQAVREDEESNEGDSDDTDLQIFCVSCGHPINPRVALRHMERCYAKYESQTSFGSMYPTRIEGATRLFCDVYNPQSKTYCKRLQVLCPEHSRDPKVPADEVCGCPLVRDVFELTGDFCRLPKRQCNRHYCWEKLRRAEVDLERVRVWYKLDELFEQERNVRTAMTNRAGLLALMLHQTIQHDPLTTDLRSSADR.

M1 carries the post-translational modification N-acetylmethionine. Positions 1–14 are enriched in acidic residues; sequence MEGDGSDPEPPDAG. The segment at 1-20 is disordered; it reads MEGDGSDPEPPDAGEDSKSE. A phosphoserine mark is found at S6 and S19. The PHD-type zinc-finger motif lies at 28 to 76; the sequence is YCICRKPDINCFMIGCDNCNEWFHGDCIRITEKMAKAIREWYCRECREK. The segment at 84–162 is disordered; that stretch reads YRHKKSRERD…QHHQQQQQQI (79 aa). Basic and acidic residues predominate over residues 90-120; that stretch reads RERDGNERDSSEPRDEGGGRKRPVPDPDLQR. S124 carries the post-translational modification Phosphoserine. The CXXC-type zinc-finger motif lies at 160–209; that stretch reads QQIKRSARMCGECEACRRTEDCGHCDFCRDMKKFGGPNKIRQKCRLRQCQ. Zn(2+) is bound by residues C169, C172, C175, C181, C184, C187, C203, and C208. 2 disordered regions span residues 219 to 287 and 311 to 373; these read FPSS…LPLD and EESP…ASLP. S224 carries the phosphoserine modification. Phosphothreonine is present on T227. Low complexity predominate over residues 239 to 249; sequence LPTQQQPQPSQ. A Glycyl lysine isopeptide (Lys-Gly) (interchain with G-Cter in SUMO2) cross-link involves residue K250. A compositionally biased stretch (basic residues) spans 321–334; that stretch reads RKRAVKVKHVKRRE. Positions 335–345 are enriched in basic and acidic residues; the sequence is KKSEKKKEERY. Basic residues predominate over residues 346 to 358; it reads KRHRQKQKHKDKW. Residues 359–368 are compositionally biased toward basic and acidic residues; that stretch reads KHPERADAKD. Positions 422-474 form a coiled coil; the sequence is AEEHGKKLLERIRREQQSARTRLQEMERRFHELEAIILRAKQQAVREDEESNE.

In terms of assembly, component of the SET1 complex, at least composed of the catalytic subunit (SETD1A or SETD1B), WDR5, WDR82, RBBP5, ASH2L/ASH2, CXXC1/CFP1 HCFC1 and DPY30. Interacts with SETD1A. Interacts with ZNF335. Interacts with PRDM9; this interaction does not link PRDM9-activated recombination hotspot sites with DSB machinery and is not required for the hotspot recognition pathway. Interacts with histone H3K4me3. Post-translationally, may be regulated by proteolysis. As to expression, ubiquitous.

The protein resides in the nucleus speckle. It is found in the nucleus. In terms of biological role, transcriptional activator that exhibits a unique DNA binding specificity for CpG unmethylated motifs with a preference for CpGG. This is CXXC-type zinc finger protein 1 (CXXC1) from Homo sapiens (Human).